Here is a 612-residue protein sequence, read N- to C-terminus: Protein lin-61 (612 aa).

4 MBT repeats span residues 143–249 (YLWE…MDKI), 263–380 (NDMV…GYQL), 381–501 (NAKK…LVPP), and 508–607 (FRWD…LQPP).

As to quaternary structure, interacts preferentially with histone H3 that is dimethylated or trimethylated at 'Lys-9'.

It is found in the nucleus. It localises to the chromosome. Synthetic multivulva class B (synMuvB) protein required to repress the induction of vulval development by Ras signaling. Unlike other synMuv proteins it does not associate with the multiprotein DRM complex and the NuRD-like complex. Interaction with methylated histone H3 is essential for vulva development. It has a role in maintaining genome stability. This chain is Protein lin-61 (lin-61), found in Caenorhabditis elegans.